A 549-amino-acid chain; its full sequence is Oxygen-dependent choline dehydrogenase (549 aa).

Position 4–33 (4–33 (DFVIIGSGSAGSALAYRLSEGGKNSVIVIE)) interacts with FAD. H465 serves as the catalytic Proton acceptor.

It belongs to the GMC oxidoreductase family. FAD serves as cofactor.

It carries out the reaction choline + A = betaine aldehyde + AH2. The enzyme catalyses betaine aldehyde + NAD(+) + H2O = glycine betaine + NADH + 2 H(+). It functions in the pathway amine and polyamine biosynthesis; betaine biosynthesis via choline pathway; betaine aldehyde from choline (cytochrome c reductase route): step 1/1. Involved in the biosynthesis of the osmoprotectant glycine betaine. Catalyzes the oxidation of choline to betaine aldehyde and betaine aldehyde to glycine betaine at the same rate. This is Oxygen-dependent choline dehydrogenase from Rhizobium johnstonii (strain DSM 114642 / LMG 32736 / 3841) (Rhizobium leguminosarum bv. viciae).